A 55-amino-acid polypeptide reads, in one-letter code: UPF0391 membrane protein Meso_3110 (55 aa).

Transmembrane regions (helical) follow at residues 4-24 (WALV…GGIA) and 30-50 (IAQI…LFGL).

It belongs to the UPF0391 family.

The protein localises to the cell membrane. This is UPF0391 membrane protein Meso_3110 from Chelativorans sp. (strain BNC1).